A 306-amino-acid polypeptide reads, in one-letter code: Bacitracin transport ATP-binding protein BcrA (306 aa).

In terms of domain architecture, ABC transporter spans 5–233 (IKTTDLTKMY…NRKYLEFQLS (229 aa)). 37–44 (GRNGAGKT) serves as a coordination point for ATP.

The protein belongs to the ABC transporter superfamily.

Functionally, part of the binding-protein-dependent transport system for bacitracin that confer resistance to this antibiotic. Probably responsible for energy coupling to the transport system. The polypeptide is Bacitracin transport ATP-binding protein BcrA (bcrA) (Bacillus licheniformis).